A 326-amino-acid chain; its full sequence is MALTASVKDELSRLDIKKSSVRKAEVSAMLRFAGGLHIISGRIVIEAEVDLASTARRLRAAIAEVYGHQSEIIVVSGGGLRRGSRYVVRVVRDGEALARQTGLLDGRGRPVRGLPSAVVNGSAADAEAVWRGAFLAHGSLTEPGRSSSLEVTCPGPESALALVGAARRLGIQAKAREVRGVDRVVIRDGDTIATLLTRMGAHDALMVWEERRMRKEVRATANRLANFDDANLRRSAQAAVAAGARVDRALEILGDDVPDHLKYAGELRVAHKQASLDELGRLADPPMTKDAIAGRIRRLLAMADKRALDLGIPGTEANVTPEMMDE.

Positions 275 to 308 (SLDELGRLADPPMTKDAIAGRIRRLLAMADKRAL) form a DNA-binding region, H-T-H motif.

Belongs to the WhiA family.

In terms of biological role, involved in cell division and chromosome segregation. The chain is Probable cell division protein WhiA from Paenarthrobacter aurescens (strain TC1).